The following is a 172-amino-acid chain: VQ motif-containing protein 17 (172 aa).

The VQ motif lies at 51–60 (FREIVQNLTG). The tract at residues 60-97 (GKQDHHHHDLPHQKGLKRNPRSRRSHDHHEVHDMNKSH) is disordered. Over residues 61–71 (KQDHHHHDLPH) the composition is skewed to basic and acidic residues. Residues 72-85 (QKGLKRNPRSRRSH) show a composition bias toward basic residues. Residues 86–95 (DHHEVHDMNK) are compositionally biased toward basic and acidic residues.

The protein localises to the nucleus. Functionally, may function as positive regulator of plant growth. This is VQ motif-containing protein 17 from Arabidopsis thaliana (Mouse-ear cress).